We begin with the raw amino-acid sequence, 487 residues long: Cysteine--tRNA ligase (487 aa).

Cysteine 29 contributes to the Zn(2+) binding site. The 'HIGH' region motif lies at 31-41 (VTVYDVNHVGH). Zn(2+) is bound by residues cysteine 209, histidine 234, and glutamate 238. The 'KMSKS' region signature appears at 266-270 (KMSKS). Position 269 (lysine 269) interacts with ATP.

It belongs to the class-I aminoacyl-tRNA synthetase family. As to quaternary structure, monomer. Zn(2+) serves as cofactor.

It is found in the cytoplasm. The enzyme catalyses tRNA(Cys) + L-cysteine + ATP = L-cysteinyl-tRNA(Cys) + AMP + diphosphate. This Persephonella marina (strain DSM 14350 / EX-H1) protein is Cysteine--tRNA ligase.